The primary structure comprises 191 residues: Protein GrpE (191 aa).

Residues 1–14 are compositionally biased toward polar residues; it reads MEDQKQTPSNQTAT. Positions 1-35 are disordered; the sequence is MEDQKQTPSNQTATPAGDEATSTAAASPETGAPDT. The segment covering 19 to 35 has biased composition (low complexity); that stretch reads EATSTAAASPETGAPDT.

The protein belongs to the GrpE family. In terms of assembly, homodimer.

It localises to the cytoplasm. Participates actively in the response to hyperosmotic and heat shock by preventing the aggregation of stress-denatured proteins, in association with DnaK and GrpE. It is the nucleotide exchange factor for DnaK and may function as a thermosensor. Unfolded proteins bind initially to DnaJ; upon interaction with the DnaJ-bound protein, DnaK hydrolyzes its bound ATP, resulting in the formation of a stable complex. GrpE releases ADP from DnaK; ATP binding to DnaK triggers the release of the substrate protein, thus completing the reaction cycle. Several rounds of ATP-dependent interactions between DnaJ, DnaK and GrpE are required for fully efficient folding. The sequence is that of Protein GrpE from Cupriavidus taiwanensis (strain DSM 17343 / BCRC 17206 / CCUG 44338 / CIP 107171 / LMG 19424 / R1) (Ralstonia taiwanensis (strain LMG 19424)).